The following is a 227-amino-acid chain: ATP-dependent dethiobiotin synthetase BioD (227 aa).

ATP is bound at residue 12 to 17; sequence DVGKTV. Mg(2+) is bound at residue threonine 16. Residue lysine 37 is part of the active site. Threonine 41 serves as a coordination point for substrate. ATP contacts are provided by residues aspartate 50, 110-113, 171-172, and 201-203; these read EGAG, GS, and PAG. Positions 50 and 110 each coordinate Mg(2+).

It belongs to the dethiobiotin synthetase family. Homodimer. The cofactor is Mg(2+).

It localises to the cytoplasm. The catalysed reaction is (7R,8S)-7,8-diammoniononanoate + CO2 + ATP = (4R,5S)-dethiobiotin + ADP + phosphate + 3 H(+). The protein operates within cofactor biosynthesis; biotin biosynthesis; biotin from 7,8-diaminononanoate: step 1/2. Its function is as follows. Catalyzes a mechanistically unusual reaction, the ATP-dependent insertion of CO2 between the N7 and N8 nitrogen atoms of 7,8-diaminopelargonic acid (DAPA, also called 7,8-diammoniononanoate) to form a ureido ring. This Rhodococcus erythropolis (strain PR4 / NBRC 100887) protein is ATP-dependent dethiobiotin synthetase BioD.